Reading from the N-terminus, the 233-residue chain is Aspartate/glutamate leucyltransferase (233 aa).

The protein belongs to the R-transferase family. Bpt subfamily.

The protein resides in the cytoplasm. It catalyses the reaction N-terminal L-glutamyl-[protein] + L-leucyl-tRNA(Leu) = N-terminal L-leucyl-L-glutamyl-[protein] + tRNA(Leu) + H(+). The catalysed reaction is N-terminal L-aspartyl-[protein] + L-leucyl-tRNA(Leu) = N-terminal L-leucyl-L-aspartyl-[protein] + tRNA(Leu) + H(+). Functionally, functions in the N-end rule pathway of protein degradation where it conjugates Leu from its aminoacyl-tRNA to the N-termini of proteins containing an N-terminal aspartate or glutamate. In Vibrio parahaemolyticus serotype O3:K6 (strain RIMD 2210633), this protein is Aspartate/glutamate leucyltransferase.